A 489-amino-acid polypeptide reads, in one-letter code: GDP-fucose protein O-fucosyltransferase 4 (489 aa).

Over 1 to 7 (MAARCTE) the chain is Cytoplasmic. The chain crosses the membrane as a helical; Signal-anchor for type II membrane protein span at residues 8–24 (AVLAALGVLSVCSASSS). Residues 25 to 489 (GSEASGEAER…EIFMKRNKNL (465 aa)) are Lumenal-facing. Asparagine 162 carries N-linked (GlcNAc...) asparagine glycosylation. Residues cysteine 385 and cysteine 388 are joined by a disulfide bond.

The protein belongs to the glycosyltransferase 10 family. In terms of tissue distribution, widely expressed. Expressed at slightly higher level in heart, kidney and lung.

It localises to the endoplasmic reticulum membrane. It catalyses the reaction L-threonyl-[protein] + GDP-beta-L-fucose = 3-O-(alpha-L-fucosyl)-L-threonyl-[protein] + GDP + H(+). The enzyme catalyses L-seryl-[protein] + GDP-beta-L-fucose = 3-O-(alpha-L-fucosyl)-L-seryl-[protein] + GDP + H(+). Its pathway is protein modification; protein glycosylation. Protein O-fucosyltransferase that specifically catalyzes O-fucosylation of serine or threonine residues in EMI domains of target proteins, such as MMRN1, MMRN2 and EMID1. Attaches fucose through an O-glycosidic linkage. O-fucosylation of EMI domain-containing proteins may be required for facilitating protein folding and secretion. Also shows minor alpha-(1,3)-fucosyltransferase activity toward activity toward biantennary N-glycan acceptors. However, this was tested with a library of synthetic substrates and this activity is unsure in vivo. This Mus musculus (Mouse) protein is GDP-fucose protein O-fucosyltransferase 4 (Fut11).